The sequence spans 692 residues: Formate hydrogenlyase transcriptional activator FhlA (692 aa).

Positions 202–344 constitute a GAF domain; the sequence is DMDELVSEVA…QIAERVAIAV (143 aa). Positions 381–610 constitute a Sigma-54 factor interaction domain; that stretch reads IIGRSEAMYS…LENVIERAVL (230 aa). Residues 409 to 416 and 472 to 481 contribute to the ATP site; these read GETGTGKE and ADKSSLFLDE. Residues 663-682 constitute a DNA-binding region (H-T-H motif); it reads PKGAAQRLGLKRTTLLSRMK.

Functionally, required for induction of expression of the formate dehydrogenase H and hydrogenase-3 structural genes. Also activates expression of hyf operon (encodes the silent hydrogenase-4 gene cluster). The protein is Formate hydrogenlyase transcriptional activator FhlA (fhlA) of Escherichia coli (strain K12).